A 1173-amino-acid polypeptide reads, in one-letter code: Protein GIGANTEA (1173 aa).

Disordered stretches follow at residues 150–187, 604–641, and 840–863; these read EQQN…RKPL, SGSK…NVKG, and SRTE…SGRP. 2 stretches are compositionally biased toward polar residues: residues 162-172 and 613-633; these read SKATTSGSPTS and YAST…QTAN. The span at 854 to 863 shows a compositional bias: basic and acidic residues; the sequence is RHSDEGSGRP.

Belongs to the GIGANTEA family. In terms of assembly, interacts with SPY. Interacts with ADO1 (via N-terminus) and ADO2. Interacts with ADO3 (via N-terminus). Interacts (via N-terminus) with CDF1. Interacts (via N-terminus) with TCP4. As to expression, widely expressed with highest levels in inflorescence apices, young flowers and young siliques.

It localises to the nucleus. The protein resides in the cytoplasm. Functionally, involved in regulation of circadian rhythm and photoperiodic flowering. May play a role in maintenance of circadian amplitude and period length. Is involved in phytochrome B signaling. Stabilizes ADO3 and the circadian photoreceptor ADO1/ZTL. Regulates 'CONSTANS' (CO) in the long-day flowering pathway by modulating the ADO3-dependent protein stability of CDF1 and CDF2, but is not essential to activate CO transcription. Regulates, via the microRNA miR172, a CO-independent pathway that promotes photoperiodic flowering by inducing 'FLOWERING LOCUS T'. The chain is Protein GIGANTEA (GI) from Arabidopsis thaliana (Mouse-ear cress).